A 155-amino-acid chain; its full sequence is Transcription antitermination protein NusB (155 aa).

Belongs to the NusB family.

Involved in transcription antitermination. Required for transcription of ribosomal RNA (rRNA) genes. Binds specifically to the boxA antiterminator sequence of the ribosomal RNA (rrn) operons. The sequence is that of Transcription antitermination protein NusB from Halorhodospira halophila (strain DSM 244 / SL1) (Ectothiorhodospira halophila (strain DSM 244 / SL1)).